A 318-amino-acid chain; its full sequence is DNA repair nuclease/redox regulator APEX1 (318 aa).

Residues 1–33 (MPKRGKKGAVAEDGDELKTEPEAKKSKTAAKKN) form a necessary for interaction with YBX1, binding to RNA, association together with NPM1 to rRNA, endoribonuclease activity on abasic RNA and localization in the nucleoli region. The disordered stretch occupies residues 1–60 (MPKRGKKGAVAEDGDELKTEPEAKKSKTAAKKNDKEAAGEGPALYEDPPDQKTSPSGKPA). Residues Lys-6 and Lys-7 each carry the N6-acetyllysine; by EP300 modification. The short motif at 8 to 13 (GAVAED) is the Nuclear localization signal (NLS) element. The segment covering 16–38 (ELKTEPEAKKSKTAAKKNDKEAA) has biased composition (basic and acidic residues). Residues 23–33 (AKKSKTAAKKN) form a necessary for interaction with NPM1 and for efficient rRNA binding region. N6-acetyllysine is present on residues Lys-27, Lys-31, Lys-32, and Lys-35. A Phosphoserine modification is found at Ser-54. The Nuclear export signal (NES) signature appears at 64–80 (ICSWNVDGLRAWIKKKG). Cys-65 is modified (S-nitrosocysteine; alternate). A disulfide bond links Cys-65 and Cys-93. Position 70 (Asp-70) interacts with Mg(2+). Cys-93 bears the S-nitrosocysteine; alternate mark. Glu-96 is a Mg(2+) binding site. Tyr-171 is an active-site residue. Lys-197 bears the N6-acetyllysine mark. The Mg(2+) site is built by Asp-210 and Asn-212. Asp-210 acts as the Proton donor/acceptor in catalysis. Residue Thr-233 is modified to Phosphothreonine; by CDK5. A mitochondrial targeting sequence (MTS) region spans residues 289-318 (HSLLPALCDSKIRSKALGSDHCPITLYLAL). Residue Asp-308 coordinates Mg(2+). Cys-310 is subject to S-nitrosocysteine.

This sequence belongs to the DNA repair enzymes AP/ExoA family. In terms of assembly, monomer. Homodimer; disulfide-linked. Component of the SET complex, composed of at least APEX1, SET, ANP32A, HMGB2, NME1 and TREX1. Associates with the dimer XRCC5/XRCC6 in a DNA-dependent manner. Interacts with SIRT1; the interaction is increased in the context of genotoxic stress. Interacts with HDAC1, HDAC2 and HDAC3; the interactions are not dependent on the APEX1 acetylation status. Interacts with XRCC1; the interaction is induced by SIRT1 and increased with the APEX1 acetylated form. Interacts with NPM1 (via N-terminal domain); the interaction is RNA-dependent and decreases in hydrogen peroxide-damaged cells. Interacts (via N-terminus) with YBX1 (via C-terminus); the interaction is increased in presence of APEX1 acetylated at Lys-6 and Lys-7. Interacts with HNRNPL; the interaction is DNA-dependent. Interacts (via N-terminus) with KPNA1 and KPNA2. Interacts with TXN; the interaction stimulates the FOS/JUN AP-1 complex DNA-binding activity in a redox-dependent manner. Interacts with GZMA, KRT8, MDM2, POLB, PRDX6, PRPF19, RPLP0, TOMM20 and WDR77. Binds to CDK5. The cofactor is Mg(2+). It depends on Mn(2+) as a cofactor. Phosphorylated. Phosphorylation by kinase PKC or casein kinase CK2 results in enhanced redox activity that stimulates binding of the FOS/JUN AP-1 complex to its cognate binding site. AP-endodeoxyribonuclease activity is not affected by CK2-mediated phosphorylation. Phosphorylation of Thr-233 by CDK5 in response to MPP(+)/MPTP (1-methyl-4-phenylpyridinium) reduces AP-endodeoxyribonuclease activity resulting in accumulation of DNA damage and contributing to neuronal death. In terms of processing, acetylated on Lys-6 and Lys-7. Acetylation is increased by the transcriptional coactivator EP300 acetyltransferase, genotoxic agents like H(2)O(2) and methyl methanesulfonate (MMS). Acetylation increases its binding affinity to the negative calcium response element (nCaRE) DNA promoter. The acetylated form induces a stronger binding of YBX1 to the Y-box sequence in the MDR1 promoter than the unacetylated form. Deacetylated on lysines. Lys-6 and Lys-7 are deacetylated by SIRT1. Post-translationally, cleaved at Lys-31 by granzyme A to create the mitochondrial form; leading in reduction of binding to DNA, AP endodeoxyribonuclease activity, redox activation of transcription factors and to enhanced cell death. Cleaved by granzyme K; leading to intracellular ROS accumulation and enhanced cell death after oxidative stress. Cys-69 and Cys-93 are nitrosylated in response to nitric oxide (NO) and lead to the exposure of the nuclear export signal (NES). In terms of processing, ubiquitinated by MDM2; leading to translocation to the cytoplasm and proteasomal degradation.

It is found in the nucleus. Its subcellular location is the nucleolus. It localises to the nucleus speckle. The protein resides in the endoplasmic reticulum. The protein localises to the cytoplasm. It is found in the mitochondrion. It catalyses the reaction Exonucleolytic cleavage in the 3'- to 5'-direction to yield nucleoside 5'-phosphates.. Its activity is regulated as follows. NPM1 stimulates endodeoxyribonuclease activity on double-stranded DNA with AP sites, but inhibits endoribonuclease activity on single-stranded RNA containing AP sites. Functionally, multifunctional protein that plays a central role in the cellular response to oxidative stress. The two major activities of APEX1 are DNA repair and redox regulation of transcriptional factors. Functions as an apurinic/apyrimidinic (AP) endodeoxyribonuclease in the DNA base excision repair (BER) pathway of DNA lesions induced by oxidative and alkylating agents. Initiates repair of AP sites in DNA by catalyzing hydrolytic incision of the phosphodiester backbone immediately adjacent to the damage, generating a single-strand break with 5'-deoxyribose phosphate and 3'-hydroxyl ends. Also incises at AP sites in the DNA strand of DNA/RNA hybrids, single-stranded DNA regions of R-loop structures, and single-stranded RNA molecules. Has 3'-5' exoribonuclease activity on mismatched deoxyribonucleotides at the 3' termini of nicked or gapped DNA molecules during short-patch BER. Possesses DNA 3' phosphodiesterase activity capable of removing lesions (such as phosphoglycolate) blocking the 3' side of DNA strand breaks. May also play a role in the epigenetic regulation of gene expression by participating in DNA demethylation. Acts as a loading factor for POLB onto non-incised AP sites in DNA and stimulates the 5'-terminal deoxyribose 5'-phosphate (dRp) excision activity of POLB. Plays a role in the protection from granzyme-mediated cellular repair leading to cell death. Also involved in the DNA cleavage step of class switch recombination (CSR). On the other hand, APEX1 also exerts reversible nuclear redox activity to regulate DNA binding affinity and transcriptional activity of transcriptional factors by controlling the redox status of their DNA-binding domain, such as the FOS/JUN AP-1 complex after exposure to IR. Involved in calcium-dependent down-regulation of parathyroid hormone (PTH) expression by binding to negative calcium response elements (nCaREs). Together with HNRNPL or the dimer XRCC5/XRCC6, associates with nCaRE, acting as an activator of transcriptional repression. Stimulates the YBX1-mediated MDR1 promoter activity, when acetylated at Lys-6 and Lys-7, leading to drug resistance. Also acts as an endoribonuclease involved in the control of single-stranded RNA metabolism. Plays a role in regulating MYC mRNA turnover by preferentially cleaving in between UA and CA dinucleotides of the MYC coding region determinant (CRD). In association with NMD1, plays a role in the rRNA quality control process during cell cycle progression. Associates, together with YBX1, on the MDR1 promoter. Together with NPM1, associates with rRNA. Binds DNA and RNA. The protein is DNA repair nuclease/redox regulator APEX1 (APEX1) of Gorilla gorilla gorilla (Western lowland gorilla).